We begin with the raw amino-acid sequence, 295 residues long: Bifunctional protein FolD (295 aa).

NADP(+) contacts are provided by residues 165–167 (GRG), serine 192, and isoleucine 233.

Belongs to the tetrahydrofolate dehydrogenase/cyclohydrolase family. Homodimer.

It carries out the reaction (6R)-5,10-methylene-5,6,7,8-tetrahydrofolate + NADP(+) = (6R)-5,10-methenyltetrahydrofolate + NADPH. The enzyme catalyses (6R)-5,10-methenyltetrahydrofolate + H2O = (6R)-10-formyltetrahydrofolate + H(+). The protein operates within one-carbon metabolism; tetrahydrofolate interconversion. Catalyzes the oxidation of 5,10-methylenetetrahydrofolate to 5,10-methenyltetrahydrofolate and then the hydrolysis of 5,10-methenyltetrahydrofolate to 10-formyltetrahydrofolate. In Tropheryma whipplei (strain TW08/27) (Whipple's bacillus), this protein is Bifunctional protein FolD.